The sequence spans 368 residues: Cyclin-dependent kinase 2 (368 aa).

A Protein kinase domain is found at 45–330; the sequence is FCSLRRIGEG…AKGALSHRYF (286 aa). ATP-binding positions include 51 to 59 and Lys-74; that span reads IGEGTYGVV. The Proton acceptor role is filled by Asp-170. The Mg(2+) site is built by Asn-175 and Asp-188.

This sequence belongs to the protein kinase superfamily. CMGC Ser/Thr protein kinase family. CDC2/CDKX subfamily. In terms of assembly, interacts with cye-1; the interaction likely regulates cdk-2 activity and is probably required for gld-1 phosphorylation. It depends on Mg(2+) as a cofactor.

It carries out the reaction L-seryl-[protein] + ATP = O-phospho-L-seryl-[protein] + ADP + H(+). The enzyme catalyses L-threonyl-[protein] + ATP = O-phospho-L-threonyl-[protein] + ADP + H(+). Functionally, serine/threonine-protein kinase which, in association with cye-1, regulates proliferation, quiescent state and cell fate during the development of several cell lineages. In the embryo, initiates the establishment of cell polarity through the recruitment of the centrosomal proteins spd-2 and spd-5 during prophase. Phosphorylation and inhibition of the translational repressor gld-1 by the cdk-2/cye-1 complex regulates the pool of germline stem cells and the size of the mitotic zone in the gonads by preventing entry into meiosis. The chain is Cyclin-dependent kinase 2 from Caenorhabditis elegans.